Consider the following 401-residue polypeptide: Phosphoglycerate kinase (401 aa).

Substrate is bound by residues 24 to 26 (DFN), Arg-40, 63 to 66 (HFGR), Arg-122, and Arg-155. Residues Lys-206, Gly-297, Glu-328, and 357–360 (GGDS) each bind ATP.

Belongs to the phosphoglycerate kinase family. As to quaternary structure, monomer.

The protein localises to the cytoplasm. It catalyses the reaction (2R)-3-phosphoglycerate + ATP = (2R)-3-phospho-glyceroyl phosphate + ADP. Its pathway is carbohydrate degradation; glycolysis; pyruvate from D-glyceraldehyde 3-phosphate: step 2/5. This chain is Phosphoglycerate kinase, found in Prochlorococcus marinus (strain NATL2A).